The chain runs to 82 residues: Small ribosomal subunit protein eS21 (82 aa).

Belongs to the eukaryotic ribosomal protein eS21 family.

This Oryza sativa subsp. japonica (Rice) protein is Small ribosomal subunit protein eS21 (RPS21).